A 258-amino-acid chain; its full sequence is UPF0246 protein VP0504 (258 aa).

The protein belongs to the UPF0246 family.

This Vibrio parahaemolyticus serotype O3:K6 (strain RIMD 2210633) protein is UPF0246 protein VP0504.